The chain runs to 172 residues: Large ribosomal subunit protein uL10 (172 aa).

It belongs to the universal ribosomal protein uL10 family. Part of the ribosomal stalk of the 50S ribosomal subunit. The N-terminus interacts with L11 and the large rRNA to form the base of the stalk. The C-terminus forms an elongated spine to which L12 dimers bind in a sequential fashion forming a multimeric L10(L12)X complex.

Forms part of the ribosomal stalk, playing a central role in the interaction of the ribosome with GTP-bound translation factors. This Brucella abortus biovar 1 (strain 9-941) protein is Large ribosomal subunit protein uL10 (rplJ).